The following is a 107-amino-acid chain: Large ribosomal subunit protein P2-A (107 aa).

The segment at 85 to 107 (GAAAPAAAAEEEEDDDMGFGLFD) is disordered.

This sequence belongs to the eukaryotic ribosomal protein P1/P2 family. In terms of assembly, P1 and P2 exist as dimers at the large ribosomal subunit. Post-translationally, phosphorylated.

In terms of biological role, plays an important role in the elongation step of protein synthesis. The polypeptide is Large ribosomal subunit protein P2-A (Trypanosoma cruzi).